An 816-amino-acid polypeptide reads, in one-letter code: MSHIRFFPRHRLALACMLASVSSFSFAQNQCAVADLQQSRDLAAAVSGAEYDCYHAWFSAPSATLNDIYSEASLSRIQVALDQEIARYRGEAEQARVLENLGEFVRAAYYVRYNAGTGTPEFSEALSQRFAQSTNLFLNNPHALDQGREQVGAMKSLTLMVDNVKQLPLTMDSMMAALMHFNRDTAKDTQWVDGLNNLFRSMAGHAANDAFYRYMANNTHHIDTLARFASDNAWALDTDANFIVFNALRETGRLLASPDQETKRKALAVMQQVMQRYPLGSEHDKLWLAAVEMMSYYAPEGLNGLNLEQAKQDLAARVMPNRFECQGPAIIRSEDLTDAQAAKACEVLAAKEADFHQVANTGNQPVADDLNDRVEVAVFASNDSYVDYSSFLFGNTTDNGGQYLEGTPSRADNTARFVAYRYANGEDLSILNLEHEYTHYLDARFNQYGSFSDNLAHGHIVWWLEGFAEYMHYKQGYKAAIDLIPSGKLSLSTVFDTTYSHDSNRIYRWGYLAVRFMLENHPQDVESLLALSRSGQFAQWAQQVTVLGQQYDAEFERWLDTLEVVVEPEQPGTDPEEPSEPTDPEVQVTELAANQSLQLSGEAYSEKLFYVDVPANTVRFNVSIEGAGDADLYMSYNKVAHYYDFEMSQYADGSNEEIQFAPEQNGYVKAGRYYISLTGRDSYDSVNLVAALEVEAQTPPTQVQDDLAPVVLESGEAKVLTVHQQRYAAVYVPEGVKEVRVWMSSQSNANDPYGAGNVDLYASRKHWPTAEQHEYASNYAGSNEYLAIPVTEAGYVHFSLQAPQQGDDVEMLVYFF.

The first 27 residues, 1-27 (MSHIRFFPRHRLALACMLASVSSFSFA), serve as a signal peptide directing secretion. H435 contributes to the Zn(2+) binding site. E436 is a catalytic residue. A Zn(2+)-binding site is contributed by H439.

This sequence belongs to the peptidase M9A family. It depends on Zn(2+) as a cofactor.

Its subcellular location is the secreted. It carries out the reaction Digestion of native collagen in the triple helical region at Xaa-|-Gly bonds. With synthetic peptides, a preference is shown for Gly at P3 and P1', Pro and Ala at P2 and P2', and hydroxyproline, Ala or Arg at P3'.. Functionally, possesses gelatinolytic activity. Can cause weak haemolysis on blood agar. This Vibrio parahaemolyticus serotype O3:K6 (strain RIMD 2210633) protein is Microbial collagenase (prt).